The primary structure comprises 150 residues: UPF0756 membrane protein ACICU_02320 (150 aa).

The next 4 membrane-spanning stretches (helical) occupy residues 1–21 (MLAQ…CGLL), 45–65 (FFPY…TIGV), 83–103 (FISF…WLGG), and 115–135 (VVAG…GVPV).

The protein belongs to the UPF0756 family.

The protein resides in the cell membrane. This is UPF0756 membrane protein ACICU_02320 from Acinetobacter baumannii (strain ACICU).